Consider the following 572-residue polypeptide: Bilirubin oxidase (572 aa).

The signal sequence occupies residues 1-19; it reads MFKHTLGAAALSLLFNSNA. Residues 20–38 constitute a propeptide that is removed on maturation; it reads VQASPVPETSPATGHLFKR. Plastocyanin-like domains are found at residues 98-194 and 404-526; these read VGYD…YMLT and VAFA…VFVD. 12 residues coordinate Cu cation: H132, H134, H172, H174, H436, H439, H441, H494, C495, H496, H500, and M505. N-linked (GlcNAc...) asparagine glycans are attached at residues N510 and N520.

This sequence belongs to the multicopper oxidase family. Requires Cu cation as cofactor.

It carries out the reaction 2 (4Z,15Z)-bilirubin IXalpha + O2 = 2 biliverdin IXalpha + 2 H2O. In terms of biological role, oxidation of bilirubin and other tetrapyrroles. The protein is Bilirubin oxidase of Albifimbria verrucaria (Myrothecium leaf spot and pod blight fungus).